Consider the following 134-residue polypeptide: Ribosome-binding factor A (134 aa).

Belongs to the RbfA family. Monomer. Binds 30S ribosomal subunits, but not 50S ribosomal subunits or 70S ribosomes.

The protein localises to the cytoplasm. In terms of biological role, one of several proteins that assist in the late maturation steps of the functional core of the 30S ribosomal subunit. Associates with free 30S ribosomal subunits (but not with 30S subunits that are part of 70S ribosomes or polysomes). Required for efficient processing of 16S rRNA. May interact with the 5'-terminal helix region of 16S rRNA. The sequence is that of Ribosome-binding factor A from Psychrobacter cryohalolentis (strain ATCC BAA-1226 / DSM 17306 / VKM B-2378 / K5).